The sequence spans 65 residues: Hirudin-3B' (65 aa).

Residues 1–3 form an interaction with thrombin active site region; that stretch reads VVY. Cystine bridges form between cysteine 6–cysteine 14, cysteine 16–cysteine 28, and cysteine 22–cysteine 39. The tract at residues 40-65 is disordered; that stretch reads VTGEGTPKPQSHNDGDFEEIPEEYLQ. O-linked (GalNAc...) threonine glycosylation is present at threonine 45. Positions 55-65 are interaction with fibrinogen-binding exosite of thrombin; that stretch reads DFEEIPEEYLQ. Residues 55–65 show a composition bias toward acidic residues; that stretch reads DFEEIPEEYLQ. A Sulfotyrosine modification is found at tyrosine 63.

This sequence belongs to the protease inhibitor I14 (hirudin) family.

The protein resides in the secreted. Hirudin is a potent thrombin-specific protease inhibitor. It forms a stable non-covalent complex with alpha-thrombin, thereby abolishing its ability to cleave fibrinogen. This is Hirudin-3B' from Hirudo medicinalis (Medicinal leech).